The primary structure comprises 279 residues: MSTAVLDAPKAATDHPERQYLTLLADILENGVQRGDRTGTGTLGVFGRQIRFDLAKGFPVLTTKKLHLRSIIIELLWFLKGDTNIAYLKDNGVRIWDEWADENGDLGPVYGKQWRSWATPDGRVIDQISALVENLKANPNSRRHIVTAWNPADVDDMALPPCHCLFQFFVADGKLSCQLYQRSADVFLGVPFNIASYALLTLMVAKVVGLEPGEFVHTFGDAHLYLNHLDQAREQLTREPFDFPTMKIADKRDLFGFEYEDFTLEGYQAHPHIKAEVSV.

Position 37 (Arg-37) interacts with dUMP. His-67 contacts (6R)-5,10-methylene-5,6,7,8-tetrahydrofolate. Arg-142 to Arg-143 contacts dUMP. The active-site Nucleophile is the Cys-162. DUMP-binding positions include Arg-182–Asp-185, Asn-193, and His-223–Tyr-225. Asp-185 provides a ligand contact to (6R)-5,10-methylene-5,6,7,8-tetrahydrofolate. Residue Ser-278 coordinates (6R)-5,10-methylene-5,6,7,8-tetrahydrofolate.

Belongs to the thymidylate synthase family. Bacterial-type ThyA subfamily. Homodimer.

It localises to the cytoplasm. It carries out the reaction dUMP + (6R)-5,10-methylene-5,6,7,8-tetrahydrofolate = 7,8-dihydrofolate + dTMP. It participates in pyrimidine metabolism; dTTP biosynthesis. Functionally, catalyzes the reductive methylation of 2'-deoxyuridine-5'-monophosphate (dUMP) to 2'-deoxythymidine-5'-monophosphate (dTMP) while utilizing 5,10-methylenetetrahydrofolate (mTHF) as the methyl donor and reductant in the reaction, yielding dihydrofolate (DHF) as a by-product. This enzymatic reaction provides an intracellular de novo source of dTMP, an essential precursor for DNA biosynthesis. This is Thymidylate synthase from Caulobacter vibrioides (strain ATCC 19089 / CIP 103742 / CB 15) (Caulobacter crescentus).